The following is a 153-amino-acid chain: Putative pre-16S rRNA nuclease (153 aa).

The protein belongs to the YqgF nuclease family.

It is found in the cytoplasm. Could be a nuclease involved in processing of the 5'-end of pre-16S rRNA. This chain is Putative pre-16S rRNA nuclease, found in Chloroflexus aurantiacus (strain ATCC 29366 / DSM 635 / J-10-fl).